The primary structure comprises 261 residues: Triosephosphate isomerase (261 aa).

10–12 (NWK) serves as a coordination point for substrate. The active-site Electrophile is His100. The active-site Proton acceptor is Glu172. Substrate contacts are provided by residues Gly178, Ser218, and 239 to 240 (GG).

Belongs to the triosephosphate isomerase family. In terms of assembly, homodimer.

The protein localises to the cytoplasm. The enzyme catalyses D-glyceraldehyde 3-phosphate = dihydroxyacetone phosphate. Its pathway is carbohydrate biosynthesis; gluconeogenesis. The protein operates within carbohydrate degradation; glycolysis; D-glyceraldehyde 3-phosphate from glycerone phosphate: step 1/1. Its function is as follows. Involved in the gluconeogenesis. Catalyzes stereospecifically the conversion of dihydroxyacetone phosphate (DHAP) to D-glyceraldehyde-3-phosphate (G3P). This is Triosephosphate isomerase from Mycobacteroides abscessus (strain ATCC 19977 / DSM 44196 / CCUG 20993 / CIP 104536 / JCM 13569 / NCTC 13031 / TMC 1543 / L948) (Mycobacterium abscessus).